Consider the following 311-residue polypeptide: Porphobilinogen deaminase (311 aa).

Cysteine 241 is modified (S-(dipyrrolylmethanemethyl)cysteine).

The protein belongs to the HMBS family. Monomer. Requires dipyrromethane as cofactor.

The catalysed reaction is 4 porphobilinogen + H2O = hydroxymethylbilane + 4 NH4(+). The protein operates within porphyrin-containing compound metabolism; protoporphyrin-IX biosynthesis; coproporphyrinogen-III from 5-aminolevulinate: step 2/4. Its function is as follows. Tetrapolymerization of the monopyrrole PBG into the hydroxymethylbilane pre-uroporphyrinogen in several discrete steps. The protein is Porphobilinogen deaminase of Campylobacter curvus (strain 525.92).